We begin with the raw amino-acid sequence, 199 residues long: Ribosome maturation factor RimM (199 aa).

One can recognise a PRC barrel domain in the interval 95–168; it reads EDEFYHADLV…FVRVDPVAAG (74 aa). Residues 167-199 form a disordered region; it reads AGLVEDEDGDAPREEDFDPKGRPRGPRDAGGNR. A compositionally biased stretch (basic and acidic residues) spans 176 to 193; it reads DAPREEDFDPKGRPRGPR.

This sequence belongs to the RimM family. Binds ribosomal protein uS19.

It localises to the cytoplasm. Its function is as follows. An accessory protein needed during the final step in the assembly of 30S ribosomal subunit, possibly for assembly of the head region. Essential for efficient processing of 16S rRNA. May be needed both before and after RbfA during the maturation of 16S rRNA. It has affinity for free ribosomal 30S subunits but not for 70S ribosomes. The polypeptide is Ribosome maturation factor RimM (Mesorhizobium japonicum (strain LMG 29417 / CECT 9101 / MAFF 303099) (Mesorhizobium loti (strain MAFF 303099))).